Consider the following 194-residue polypeptide: Imidazoleglycerol-phosphate dehydratase (194 aa).

This sequence belongs to the imidazoleglycerol-phosphate dehydratase family.

Its subcellular location is the cytoplasm. It carries out the reaction D-erythro-1-(imidazol-4-yl)glycerol 3-phosphate = 3-(imidazol-4-yl)-2-oxopropyl phosphate + H2O. It participates in amino-acid biosynthesis; L-histidine biosynthesis; L-histidine from 5-phospho-alpha-D-ribose 1-diphosphate: step 6/9. In Bacillus cereus (strain B4264), this protein is Imidazoleglycerol-phosphate dehydratase.